The primary structure comprises 333 residues: Pantothenate synthetase (333 aa).

27-34 contributes to the ATP binding site; it reads MGALHEGH. The active-site Proton donor is His-34. Gln-61 provides a ligand contact to (R)-pantoate. Gln-61 lines the beta-alanine pocket. 148–151 lines the ATP pocket; that stretch reads GQKD. Gln-154 provides a ligand contact to (R)-pantoate. Residues Val-177 and 185-188 each bind ATP; that span reads LSSR.

It belongs to the pantothenate synthetase family. As to quaternary structure, homodimer.

It is found in the cytoplasm. It carries out the reaction (R)-pantoate + beta-alanine + ATP = (R)-pantothenate + AMP + diphosphate + H(+). Its pathway is cofactor biosynthesis; (R)-pantothenate biosynthesis; (R)-pantothenate from (R)-pantoate and beta-alanine: step 1/1. In terms of biological role, catalyzes the condensation of pantoate with beta-alanine in an ATP-dependent reaction via a pantoyl-adenylate intermediate. The sequence is that of Pantothenate synthetase from Streptomyces avermitilis (strain ATCC 31267 / DSM 46492 / JCM 5070 / NBRC 14893 / NCIMB 12804 / NRRL 8165 / MA-4680).